Consider the following 268-residue polypeptide: Microtubule-associated protein RP/EB family member 1 (268 aa).

At Ala-2 the chain carries N-acetylalanine. Residues 14–116 form the Calponin-homology (CH) domain; that stretch reads NLSRHDMLAW…FVQWFKKFFD (103 aa). Residue Lys-66 is modified to N6-crotonyllysine. Tyr-124 is subject to Phosphotyrosine. The tract at residues 124–268 is interaction with MTUS2/TIP150; that stretch reads YDPVAARQGQ…GGPQEEQEEY (145 aa). The segment at 146–187 is disordered; sequence LNKPKKPLTSSSAAPQRPISTQRTAAAPKAGPGVVRKNPGVG. Polar residues predominate over residues 153-169; sequence LTSSSAAPQRPISTQRT. 2 positions are modified to phosphoserine: Ser-155 and Ser-165. One can recognise an EB1 C-terminal domain in the interval 185 to 255; it reads GVGNGDDEAA…LYATDEGFVI (71 aa). The interval 185-268 is interaction with CDK5RAP2; that stretch reads GVGNGDDEAA…GGPQEEQEEY (84 aa). An interaction with APC region spans residues 206–211; it reads TVEDLE. The DCTN1-binding stretch occupies residues 208-268; the sequence is EDLEKERDFY…GGPQEEQEEY (61 aa). Lys-220 bears the N6-acetyllysine mark. An APC-binding region spans residues 220–242; sequence KLRNIELICQENEGENDPVLQRI. The interval 232–255 is interaction with SKA1; the sequence is EGENDPVLQRIVDILYATDEGFVI.

This sequence belongs to the MAPRE family. Homodimer. Heterodimer with MAPRE3. Interacts with DCTN1, DCTN2, TERF1 and dynein intermediate chain. Interaction with DIAPH1 and DIAPH2. Interacts (via C-terminal residues 206-211) with APC (via C-terminal residues 2674-2843); the interaction inhibits association with and bundling of F-actin. Interacts with CLASP2, DST, KIF2C and STIM1; probably required for their targeting to the growing microtubule plus ends. Interacts with MTUS2; interaction is direct and probably targets MTUS2 to microtubules. Interacts (via C-terminus) with SKA1 (via SXIP motif); the interaction is direct and stabilizes the kinetochore-microtubule attachment of the SKA1 complex. Interacts with APC2. Interacts with CLASP1. Interacts with CDK5RAP2. Interacts with MACF1. Interacts with RABL2/RABL2A; binds preferentially to GTP-bound RABL2. Interacts with KCNAB2. Interacts (via C-terminus) with CLIP1. Interacts with SLAIN2 and SLAIN1. Interacts with KIF18B; this interaction is required for efficient accumulation of KIF18B at microtubule plus ends. Interacts with MISP. Interacts with KNSTRN. Interacts with NCKAP5L. Interacts with CAMSAP2. Interacts with PDE4DIP isoform 13/MMG8/SMYLE; this interaction is required for its recruitment to the Golgi apparatus. Forms a pericentrosomal complex with AKAP9, CDK5RAP2 and PDE4DIP isoform 13/MMG8/SMYLE; within this complex, MAPRE1 binding to CDK5RAP2 may be mediated by PDE4DIP. Interacts with AKNA. Interacts with GAS2L1, GAS2L2, and GAS2L3. Interacts with RARRES1 and AGBL2. Post-translationally, acetylation at Lys-220 by KAT2B/PCAF promotes dynamic kinetochore-microtubule interactions in early mitosis. Crotonylated by KAT5 during mitosis, promoting astral microtubule plasticity and dynamic connection between astral microtubules and the cortex during mitotic chromosome segregation, thereby ensuring accurate spindle positioning in mitosis. Decrotonylated by HDAC3. As to expression, ubiquitously expressed.

The protein resides in the cytoplasm. It is found in the cytoskeleton. Its subcellular location is the microtubule organizing center. The protein localises to the centrosome. It localises to the golgi apparatus. The protein resides in the spindle. It is found in the spindle pole. In terms of biological role, plus-end tracking protein (+TIP) that binds to the plus-end of microtubules and regulates the dynamics of the microtubule cytoskeleton. Recruits other +TIP proteins to microtubules by binding to a conserved Ser-X-Leu-Pro (SXLP) motif in their polypeptide chains. Promotes cytoplasmic microtubule nucleation and elongation. Involved in mitotic spindle positioning by stabilizing microtubules and promoting dynamic connection between astral microtubules and the cortex during mitotic chromosome segregation. Assists chromosome alignment in metaphase by recruiting the SKA complex to the spindle and stabilizing its interactions with microtubule bundles (K-fibers). Also acts as a regulator of minus-end microtubule organization: interacts with the complex formed by AKAP9 and PDE4DIP, leading to recruit CAMSAP2 to the Golgi apparatus, thereby tethering non-centrosomal minus-end microtubules to the Golgi, an important step for polarized cell movement. Promotes elongation of CAMSAP2-decorated microtubule stretches on the minus-end of microtubules. Acts as a regulator of autophagosome transport via interaction with CAMSAP2. Functions downstream of Rho GTPases and DIAPH1 in stable microtubule formation. May play a role in cell migration. This chain is Microtubule-associated protein RP/EB family member 1, found in Homo sapiens (Human).